A 183-amino-acid polypeptide reads, in one-letter code: UPF0340 protein LCA_1354 (183 aa).

Belongs to the UPF0340 family.

In Latilactobacillus sakei subsp. sakei (strain 23K) (Lactobacillus sakei subsp. sakei), this protein is UPF0340 protein LCA_1354.